The following is a 359-amino-acid chain: Fructose-bisphosphate aldolase class 2 (359 aa).

Lys-9 carries the N6-acetyllysine modification. Ser-62 lines the D-glyceraldehyde 3-phosphate pocket. Asp-110 functions as the Proton donor in the catalytic mechanism. Zn(2+) contacts are provided by His-111, Asp-145, Glu-175, and His-227. Gly-228 lines the dihydroxyacetone phosphate pocket. Residue His-265 coordinates Zn(2+). Dihydroxyacetone phosphate is bound by residues 266–268 (GGS) and 287–290 (NIDT).

It belongs to the class II fructose-bisphosphate aldolase family. Homodimer. The cofactor is Zn(2+).

It catalyses the reaction beta-D-fructose 1,6-bisphosphate = D-glyceraldehyde 3-phosphate + dihydroxyacetone phosphate. It participates in carbohydrate degradation; glycolysis; D-glyceraldehyde 3-phosphate and glycerone phosphate from D-glucose: step 4/4. In terms of biological role, catalyzes the aldol condensation of dihydroxyacetone phosphate (DHAP or glycerone-phosphate) with glyceraldehyde 3-phosphate (G3P) to form fructose 1,6-bisphosphate (FBP) in gluconeogenesis and the reverse reaction in glycolysis. In Escherichia coli O157:H7, this protein is Fructose-bisphosphate aldolase class 2 (fbaA).